Reading from the N-terminus, the 64-residue chain is Alpha-like toxin Lqh6 (64 aa).

Residues 2–63 enclose the LCN-type CS-alpha/beta domain; sequence RDGYIAQPEN…GIIVDGVKCH (62 aa). 4 disulfide bridges follow: Cys-12-Cys-62, Cys-16-Cys-34, Cys-20-Cys-44, and Cys-24-Cys-46. Position 64 is a lysine amide (Lys-64).

The protein belongs to the long (4 C-C) scorpion toxin superfamily. Sodium channel inhibitor family. Alpha subfamily. As to expression, expressed by the venom gland.

The protein localises to the secreted. Alpha toxins bind voltage-independently at site-3 of sodium channels (Nav) and inhibit the inactivation of the activated channels, thereby blocking neuronal transmission. This toxin is highly toxic to insects and mice, and inhibits the binding of alpha-toxin to cockroach neuronal membranes. In Leiurus hebraeus (Hebrew deathstalker scorpion), this protein is Alpha-like toxin Lqh6.